We begin with the raw amino-acid sequence, 298 residues long: Bifunctional protein FolD (298 aa).

NADP(+)-binding positions include 166–168 (GRS), Ser191, and Ile232.

Belongs to the tetrahydrofolate dehydrogenase/cyclohydrolase family. Homodimer.

It catalyses the reaction (6R)-5,10-methylene-5,6,7,8-tetrahydrofolate + NADP(+) = (6R)-5,10-methenyltetrahydrofolate + NADPH. The enzyme catalyses (6R)-5,10-methenyltetrahydrofolate + H2O = (6R)-10-formyltetrahydrofolate + H(+). Its pathway is one-carbon metabolism; tetrahydrofolate interconversion. Its function is as follows. Catalyzes the oxidation of 5,10-methylenetetrahydrofolate to 5,10-methenyltetrahydrofolate and then the hydrolysis of 5,10-methenyltetrahydrofolate to 10-formyltetrahydrofolate. This is Bifunctional protein FolD from Parvibaculum lavamentivorans (strain DS-1 / DSM 13023 / NCIMB 13966).